The following is a 602-amino-acid chain: Adenylosuccinate synthetase (602 aa).

Residues 74 to 80 and 104 to 106 each bind GTP; these read GDEGKGK and GHT. Asp75 (proton acceptor) is an active-site residue. Mg(2+)-binding residues include Asp75 and Gly104. IMP is bound by residues 75–78, 102–105, Thr189, Lys203, Gln315, Thr331, and Lys459; these read DEGK and NAGH. His105 serves as the catalytic Proton donor. 455–461 serves as a coordination point for substrate; it reads AVTKKPR. Residues Arg461 and 589 to 591 each bind GTP; that span reads GNG.

This sequence belongs to the adenylosuccinate synthetase family. As to quaternary structure, homodimer. Requires Mg(2+) as cofactor.

The protein resides in the cytoplasm. The enzyme catalyses IMP + L-aspartate + GTP = N(6)-(1,2-dicarboxyethyl)-AMP + GDP + phosphate + 2 H(+). The protein operates within purine metabolism; AMP biosynthesis via de novo pathway; AMP from IMP: step 1/2. In terms of biological role, plays an important role in the salvage pathway for purine nucleotide biosynthesis. Catalyzes the first committed step in the biosynthesis of AMP from IMP. The polypeptide is Adenylosuccinate synthetase (Trypanosoma brucei gambiense (strain MHOM/CI/86/DAL972)).